Reading from the N-terminus, the 105-residue chain is Signal peptidase complex subunit 1 (105 aa).

Over Met-1–Gln-32 the chain is Cytoplasmic. A helical membrane pass occupies residues Val-33 to Ser-53. Over Tyr-54 to Met-56 the chain is Lumenal. A helical membrane pass occupies residues Phe-57 to Leu-77. Residues Phe-78–Lys-105 lie on the Cytoplasmic side of the membrane.

Belongs to the SPCS1 family. As to quaternary structure, component of the signal peptidase complex (SPC) composed of a catalytic subunit sec-11 and three accessory subunits spcs-1, spcs-2 and spcs-3. The complex induces a local thinning of the ER membrane which is used to measure the length of the signal peptide (SP) h-region of protein substrates. This ensures the selectivity of the complex towards h-regions shorter than 18-20 amino acids.

It is found in the endoplasmic reticulum membrane. In terms of biological role, component of the signal peptidase complex (SPC) which catalyzes the cleavage of N-terminal signal sequences from nascent proteins as they are translocated into the lumen of the endoplasmic reticulum. Dispensable for SPC enzymatic activity. In Caenorhabditis elegans, this protein is Signal peptidase complex subunit 1.